Reading from the N-terminus, the 322-residue chain is 4-diphosphocytidyl-2-C-methyl-D-erythritol kinase (322 aa).

Lys-18 is a catalytic residue. 130–140 is a binding site for ATP; that stretch reads PMGAGLGGGSS. The active site involves Asp-172.

Belongs to the GHMP kinase family. IspE subfamily.

It carries out the reaction 4-CDP-2-C-methyl-D-erythritol + ATP = 4-CDP-2-C-methyl-D-erythritol 2-phosphate + ADP + H(+). Its pathway is isoprenoid biosynthesis; isopentenyl diphosphate biosynthesis via DXP pathway; isopentenyl diphosphate from 1-deoxy-D-xylulose 5-phosphate: step 3/6. Functionally, catalyzes the phosphorylation of the position 2 hydroxy group of 4-diphosphocytidyl-2C-methyl-D-erythritol. This Psychrobacter cryohalolentis (strain ATCC BAA-1226 / DSM 17306 / VKM B-2378 / K5) protein is 4-diphosphocytidyl-2-C-methyl-D-erythritol kinase.